The sequence spans 41 residues: Submaxillary gland androgen-regulated protein 2, isoform beta (41 aa).

Residues Met1–Lys22 form the signal peptide.

The protein resides in the secreted. In terms of biological role, may play a role in protection or detoxification. This chain is Submaxillary gland androgen-regulated protein 2, isoform beta (Smr2), found in Mus musculus (Mouse).